A 554-amino-acid chain; its full sequence is CTP synthase (554 aa).

The segment at 1-265 is amidoligase domain; sequence MTPLIFVTGG…DELVIDQFKL (265 aa). Ser-13 is a CTP binding site. Residue Ser-13 coordinates UTP. ATP is bound by residues 14 to 19 and Asp-71; that span reads SLGKGI. 2 residues coordinate Mg(2+): Asp-71 and Glu-139. Residues 146-148, 186-191, and Lys-222 contribute to the CTP site; these read DIE and KTKPTQ. UTP contacts are provided by residues 186–191 and Lys-222; that span reads KTKPTQ. Residues 292-545 enclose the Glutamine amidotransferase type-1 domain; that stretch reads TIAVVGKYVD…VRAAREKKAG (254 aa). Gly-353 is a binding site for L-glutamine. Catalysis depends on Cys-380, which acts as the Nucleophile; for glutamine hydrolysis. Residues 381 to 384, Glu-404, and Arg-471 contribute to the L-glutamine site; that span reads YGMQ. Residues His-518 and Glu-520 contribute to the active site.

It belongs to the CTP synthase family. As to quaternary structure, homotetramer.

It catalyses the reaction UTP + L-glutamine + ATP + H2O = CTP + L-glutamate + ADP + phosphate + 2 H(+). The catalysed reaction is L-glutamine + H2O = L-glutamate + NH4(+). It carries out the reaction UTP + NH4(+) + ATP = CTP + ADP + phosphate + 2 H(+). It functions in the pathway pyrimidine metabolism; CTP biosynthesis via de novo pathway; CTP from UDP: step 2/2. Allosterically activated by GTP, when glutamine is the substrate; GTP has no effect on the reaction when ammonia is the substrate. The allosteric effector GTP functions by stabilizing the protein conformation that binds the tetrahedral intermediate(s) formed during glutamine hydrolysis. Inhibited by the product CTP, via allosteric rather than competitive inhibition. Functionally, catalyzes the ATP-dependent amination of UTP to CTP with either L-glutamine or ammonia as the source of nitrogen. Regulates intracellular CTP levels through interactions with the four ribonucleotide triphosphates. This Xanthomonas campestris pv. campestris (strain 8004) protein is CTP synthase.